The following is a 318-amino-acid chain: Acetyl-coenzyme A carboxylase carboxyl transferase subunit alpha (318 aa).

Residues 39–293 (KLEKKVDKMR…HEALARHLKE (255 aa)) enclose the CoA carboxyltransferase C-terminal domain.

The protein belongs to the AccA family. As to quaternary structure, acetyl-CoA carboxylase is a heterohexamer composed of biotin carboxyl carrier protein (AccB), biotin carboxylase (AccC) and two subunits each of ACCase subunit alpha (AccA) and ACCase subunit beta (AccD).

The protein localises to the cytoplasm. It catalyses the reaction N(6)-carboxybiotinyl-L-lysyl-[protein] + acetyl-CoA = N(6)-biotinyl-L-lysyl-[protein] + malonyl-CoA. The protein operates within lipid metabolism; malonyl-CoA biosynthesis; malonyl-CoA from acetyl-CoA: step 1/1. Functionally, component of the acetyl coenzyme A carboxylase (ACC) complex. First, biotin carboxylase catalyzes the carboxylation of biotin on its carrier protein (BCCP) and then the CO(2) group is transferred by the carboxyltransferase to acetyl-CoA to form malonyl-CoA. This is Acetyl-coenzyme A carboxylase carboxyl transferase subunit alpha from Geobacter metallireducens (strain ATCC 53774 / DSM 7210 / GS-15).